Here is a 213-residue protein sequence, read N- to C-terminus: G2/mitotic-specific cyclin-1 (213 aa).

The tract at residues 1-23 (MKFSEEKNVSNNPTNFEGGLDSR) is disordered.

Belongs to the cyclin family. Cyclin AB subfamily. In terms of assembly, interacts with the CDC2 protein kinase to form a serine/threonine kinase holoenzyme complex also known as maturation promoting factor (MPF). The cyclin subunit imparts substrate specificity to the complex. In terms of tissue distribution, only expressed in organs with dividing cells.

In terms of biological role, essential for the control of the cell cycle at the G2/M (mitosis) transition. This chain is G2/mitotic-specific cyclin-1, found in Medicago sativa (Alfalfa).